Consider the following 477-residue polypeptide: tRNA-2-methylthio-N(6)-dimethylallyladenosine synthase (477 aa).

Residues 3 to 120 (KKLHIKTWGC…LPTMIKQVQE (118 aa)) enclose the MTTase N-terminal domain. Residues Cys12, Cys49, Cys83, Cys157, Cys161, and Cys164 each contribute to the [4Fe-4S] cluster site. A Radical SAM core domain is found at 143-375 (RAEGATAFVS…QHVINNQSMQ (233 aa)). Residues 378–441 (RAMLGSTQRI…PNSLRGKFLR (64 aa)) form the TRAM domain.

This sequence belongs to the methylthiotransferase family. MiaB subfamily. Monomer. The cofactor is [4Fe-4S] cluster.

It localises to the cytoplasm. It catalyses the reaction N(6)-dimethylallyladenosine(37) in tRNA + (sulfur carrier)-SH + AH2 + 2 S-adenosyl-L-methionine = 2-methylsulfanyl-N(6)-dimethylallyladenosine(37) in tRNA + (sulfur carrier)-H + 5'-deoxyadenosine + L-methionine + A + S-adenosyl-L-homocysteine + 2 H(+). Catalyzes the methylthiolation of N6-(dimethylallyl)adenosine (i(6)A), leading to the formation of 2-methylthio-N6-(dimethylallyl)adenosine (ms(2)i(6)A) at position 37 in tRNAs that read codons beginning with uridine. The chain is tRNA-2-methylthio-N(6)-dimethylallyladenosine synthase from Aeromonas hydrophila subsp. hydrophila (strain ATCC 7966 / DSM 30187 / BCRC 13018 / CCUG 14551 / JCM 1027 / KCTC 2358 / NCIMB 9240 / NCTC 8049).